A 1119-amino-acid polypeptide reads, in one-letter code: DNA-directed RNA polymerase subunit beta (1119 aa).

The protein belongs to the RNA polymerase beta chain family. In terms of assembly, the RNAP catalytic core consists of 2 alpha, 1 beta, 1 beta' and 1 omega subunit. When a sigma factor is associated with the core the holoenzyme is formed, which can initiate transcription.

The catalysed reaction is RNA(n) + a ribonucleoside 5'-triphosphate = RNA(n+1) + diphosphate. In terms of biological role, DNA-dependent RNA polymerase catalyzes the transcription of DNA into RNA using the four ribonucleoside triphosphates as substrates. This Thermus aquaticus protein is DNA-directed RNA polymerase subunit beta.